The primary structure comprises 985 residues: Protein psiQ (985 aa).

Positions 1–20 are cleaved as a signal peptide; that stretch reads MMKYIYILLIFSLLFLKINS. Positions 102–247 constitute a PA14 domain; that stretch reads QSTTNPNVYA…YDECGVCQGD (146 aa). N-linked (GlcNAc...) asparagine glycans are attached at residues N127, N309, N424, N491, N517, N527, N592, N620, N649, N696, N735, N767, N786, N824, and N842.

Belongs to the prespore-cell-inducing factor family.

It is found in the secreted. This is Protein psiQ (psiQ) from Dictyostelium discoideum (Social amoeba).